Reading from the N-terminus, the 243-residue chain is MSGHSKWHNIQGRKNAQDAKRGKVFQKLSREIYMAAKSGGPDPLGNPRLRLAVDKARAANMPKDNIQRAIKKAEGNSDEHYDEVTYEGYAPGGVAILVEALTDNKNRTASSVRVAFTRNGGSLGATGSVAYMFDRKGYIVIDRSTTDADEDQMLMDVMEAGGDDLQTSDDAYEIYTDAKSFTAVRDALEKAGYQLAVSELTMVPQNTTPVPADKKEQFEKLVDALEDDDDVSNVYTAAADEEE.

The interval 1-22 (MSGHSKWHNIQGRKNAQDAKRG) is disordered.

It belongs to the TACO1 family.

It localises to the cytoplasm. In Lactobacillus delbrueckii subsp. bulgaricus (strain ATCC 11842 / DSM 20081 / BCRC 10696 / JCM 1002 / NBRC 13953 / NCIMB 11778 / NCTC 12712 / WDCM 00102 / Lb 14), this protein is Probable transcriptional regulatory protein Ldb0677.